The primary structure comprises 200 residues: Arylesterase (200 aa).

The first 19 residues, 1–19, serve as a signal peptide directing secretion; it reads MIRLLSLVLFFCLSAASQA. Ser29 (nucleophile) is an active-site residue. Residues Asp176 and His179 contribute to the active site.

The protein belongs to the 'GDSL' lipolytic enzyme family. In terms of assembly, homodimer.

It carries out the reaction a phenyl acetate + H2O = a phenol + acetate + H(+). Favors the hydrolysis of several arylesters. This chain is Arylesterase, found in Vibrio mimicus.